Reading from the N-terminus, the 326-residue chain is Eukaryotic translation initiation factor 3 subunit I (326 aa).

5 WD repeats span residues 8–47 (GHER…RLGT), 50–89 (GHQG…VIAS), 145–184 (MTES…KVVD), 188–227 (DHSA…CLKT), and 285–326 (GHFG…NIFE).

This sequence belongs to the eIF-3 subunit I family. In terms of assembly, component of the eukaryotic translation initiation factor 3 (eIF-3) complex. The eIF-3 complex interacts with pix.

The protein localises to the cytoplasm. Its function is as follows. Component of the eukaryotic translation initiation factor 3 (eIF-3) complex, which is involved in protein synthesis of a specialized repertoire of mRNAs and, together with other initiation factors, stimulates binding of mRNA and methionyl-tRNAi to the 40S ribosome. The eIF-3 complex specifically targets and initiates translation of a subset of mRNAs involved in cell proliferation. This Drosophila erecta (Fruit fly) protein is Eukaryotic translation initiation factor 3 subunit I.